A 557-amino-acid polypeptide reads, in one-letter code: Dihydroxy-acid dehydratase (557 aa).

Residue Cys49 participates in [2Fe-2S] cluster binding. Asp81 contacts Mg(2+). Cys122 is a [2Fe-2S] cluster binding site. Asp123 and Lys124 together coordinate Mg(2+). Lys124 bears the N6-carboxylysine mark. Residue Cys194 participates in [2Fe-2S] cluster binding. Residue Glu446 coordinates Mg(2+). Catalysis depends on Ser472, which acts as the Proton acceptor.

It belongs to the IlvD/Edd family. As to quaternary structure, homodimer. The cofactor is [2Fe-2S] cluster. It depends on Mg(2+) as a cofactor.

It catalyses the reaction (2R)-2,3-dihydroxy-3-methylbutanoate = 3-methyl-2-oxobutanoate + H2O. The catalysed reaction is (2R,3R)-2,3-dihydroxy-3-methylpentanoate = (S)-3-methyl-2-oxopentanoate + H2O. It functions in the pathway amino-acid biosynthesis; L-isoleucine biosynthesis; L-isoleucine from 2-oxobutanoate: step 3/4. Its pathway is amino-acid biosynthesis; L-valine biosynthesis; L-valine from pyruvate: step 3/4. Functions in the biosynthesis of branched-chain amino acids. Catalyzes the dehydration of (2R,3R)-2,3-dihydroxy-3-methylpentanoate (2,3-dihydroxy-3-methylvalerate) into 2-oxo-3-methylpentanoate (2-oxo-3-methylvalerate) and of (2R)-2,3-dihydroxy-3-methylbutanoate (2,3-dihydroxyisovalerate) into 2-oxo-3-methylbutanoate (2-oxoisovalerate), the penultimate precursor to L-isoleucine and L-valine, respectively. The polypeptide is Dihydroxy-acid dehydratase (Prochlorococcus marinus (strain AS9601)).